We begin with the raw amino-acid sequence, 27 residues long: GFGSLFKFLGKKVLKTVAKQAAKKQME.

At glutamate 27 the chain carries Glutamic acid 1-amide.

In terms of tissue distribution, expressed by the venom gland.

It is found in the secreted. This Cupiennius salei (American wandering spider) protein is Cupiennin-3b.